The following is a 129-amino-acid chain: MSGRGKQGGKARAKAKSRSSRAGLQFPVGRVHRLLRKGNYAERVGAGAPVYLAAVLEYLTAEILELAGNPARDNKKTRIIPRHLQLAIRNDEELNKLLGKVTIAQGGVLPNIQAVLLPKKTDSHKAKAK.

The disordered stretch occupies residues 1–22 (MSGRGKQGGKARAKAKSRSSRA). Serine 2 is subject to N-acetylserine. Serine 2 bears the Phosphoserine mark. Lysine 6 is subject to N6-(2-hydroxyisobutyryl)lysine. N6-acetyllysine is present on residues lysine 6 and lysine 10. Over residues 7–19 (QGGKARAKAKSRS) the composition is skewed to basic residues. Position 10 is an N6-(2-hydroxyisobutyryl)lysine; alternate (lysine 10). Lysine 10 carries the N6-lactoyllysine; alternate modification. Lysine 10 is modified (N6-succinyllysine). Residues lysine 14 and lysine 16 each participate in a glycyl lysine isopeptide (Lys-Gly) (interchain with G-Cter in ubiquitin) cross-link. Lysine 37 is subject to N6-(2-hydroxyisobutyryl)lysine; alternate. An N6-(2-hydroxyisobutyryl)lysine mark is found at lysine 75 and lysine 76. N6-(2-hydroxyisobutyryl)lysine; alternate is present on lysine 96. Residue lysine 96 is modified to N6-succinyllysine. Lysine 96 is modified (N6-glutaryllysine; alternate). Position 100 is an N6-glutaryllysine (lysine 100). The residue at position 105 (glutamine 105) is an N5-methylglutamine. Residue lysine 119 is modified to N6-(2-hydroxyisobutyryl)lysine; alternate. Lysine 119 and lysine 120 each carry N6-glutaryllysine; alternate. Lysine 120 participates in a covalent cross-link: Glycyl lysine isopeptide (Lys-Gly) (interchain with G-Cter in ubiquitin).

This sequence belongs to the histone H2A family. As to quaternary structure, the nucleosome is a histone octamer containing two molecules each of H2A, H2B, H3 and H4 assembled in one H3-H4 heterotetramer and two H2A-H2B heterodimers. The octamer wraps approximately 147 bp of DNA. Monoubiquitination of Lys-120 (H2AK119Ub) gives a specific tag for epigenetic transcriptional repression. Following DNA double-strand breaks (DSBs), it is ubiquitinated through 'Lys-63' linkage of ubiquitin moieties, leading to the recruitment of repair proteins to sites of DNA damage. H2AK119Ub and ionizing radiation-induced 'Lys-63'-linked ubiquitination are distinct events. In terms of processing, phosphorylation on Ser-2 is enhanced during mitosis. Phosphorylation on Ser-2 directly represses transcription. Post-translationally, glutamine methylation at Gln-105 (H2AQ104me) by FBL is specifically dedicated to polymerase I. It is present at 35S ribosomal DNA locus and impairs binding of the FACT complex.

Its subcellular location is the nucleus. It is found in the chromosome. Functionally, core component of nucleosome. Nucleosomes wrap and compact DNA into chromatin, limiting DNA accessibility to the cellular machineries which require DNA as a template. Histones thereby play a central role in transcription regulation, DNA repair, DNA replication and chromosomal stability. DNA accessibility is regulated via a complex set of post-translational modifications of histones, also called histone code, and nucleosome remodeling. In Gallus gallus (Chicken), this protein is Histone H2A-III.